We begin with the raw amino-acid sequence, 330 residues long: Aspartate--ammonia ligase (330 aa).

Belongs to the class-II aminoacyl-tRNA synthetase family. AsnA subfamily.

The protein localises to the cytoplasm. It catalyses the reaction L-aspartate + NH4(+) + ATP = L-asparagine + AMP + diphosphate + H(+). It participates in amino-acid biosynthesis; L-asparagine biosynthesis; L-asparagine from L-aspartate (ammonia route): step 1/1. The sequence is that of Aspartate--ammonia ligase from Histophilus somni (strain 2336) (Haemophilus somnus).